The sequence spans 91 residues: MNTTPIRHSGLQKAVLSLYRSFLRVSNKKEMDNPSSSISNYIKTQFRLKATTIQKRDINKIESLLVKGKRQLEQIQDPEFSGFAVFTPKSK.

It belongs to the complex I LYR family. SDHAF1 subfamily. As to quaternary structure, interacts with the iron-sulfur protein subunit within the SDH catalytic dimer.

It localises to the mitochondrion matrix. Plays an essential role in the assembly of succinate dehydrogenase (SDH), an enzyme complex (also referred to as respiratory complex II) that is a component of both the tricarboxylic acid (TCA) cycle and the mitochondrial electron transport chain, and which couples the oxidation of succinate to fumarate with the reduction of ubiquinone (coenzyme Q) to ubiquinol. Promotes maturation of the iron-sulfur protein subunit of the SDH catalytic dimer, protecting it from the deleterious effects of oxidants. May act together with SDHAF3. The chain is Succinate dehydrogenase assembly factor 1A, mitochondrial from Dictyostelium discoideum (Social amoeba).